Here is a 421-residue protein sequence, read N- to C-terminus: BEN domain-containing protein 5 (421 aa).

Position 133 is an N6-acetyllysine (lysine 133). Positions 180-243 form a coiled coil; it reads RALYEELLRN…LNRRLQDVLL (64 aa). Lysine 258 participates in a covalent cross-link: Glycyl lysine isopeptide (Lys-Gly) (interchain with G-Cter in SUMO2). The BEN domain occupies 302-408; the sequence is GSGIWVDEEK…EKIMDINKSC (107 aa).

Its function is as follows. Acts as a transcriptional repressor. The sequence is that of BEN domain-containing protein 5 (Bend5) from Mus musculus (Mouse).